The sequence spans 207 residues: MPKVALYNQNGSTAGDIELNDSVFGIEPNESVVFDAILMQRASLRQGTHKVKNRSEVRGGGRKPWRQKGTGRARQGSIRSPQWRGGGIVFGPTPRSYAYKLPKKVRRLAIKSALSSKVNDNNLIVLEDLNLDAVKTKEMAAILKGLSIEKKALIVTADANETVELSARNLPGVTVVEANGINVLDVVGHEKLVMTKAAVEKVEEVLA.

The segment at 48–86 is disordered; that stretch reads THKVKNRSEVRGGGRKPWRQKGTGRARQGSIRSPQWRGG. Over residues 60–71 the composition is skewed to basic residues; the sequence is GGRKPWRQKGTG.

Belongs to the universal ribosomal protein uL4 family. Part of the 50S ribosomal subunit.

Functionally, one of the primary rRNA binding proteins, this protein initially binds near the 5'-end of the 23S rRNA. It is important during the early stages of 50S assembly. It makes multiple contacts with different domains of the 23S rRNA in the assembled 50S subunit and ribosome. In terms of biological role, forms part of the polypeptide exit tunnel. In Bacillus licheniformis (strain ATCC 14580 / DSM 13 / JCM 2505 / CCUG 7422 / NBRC 12200 / NCIMB 9375 / NCTC 10341 / NRRL NRS-1264 / Gibson 46), this protein is Large ribosomal subunit protein uL4.